The sequence spans 300 residues: Transcription initiation factor IIB (300 aa).

The segment at 2–34 (NKQKVCPACESAELIYDPERGEIVCAKCGYVIE) adopts a TFIIB-type zinc-finger fold. Residues cysteine 7, cysteine 10, cysteine 26, and cysteine 29 each contribute to the Zn(2+) site. 2 repeat units span residues 114–197 (SELD…ARNL) and 210–291 (DYVN…ELVE).

It belongs to the TFIIB family.

Its function is as follows. Stabilizes TBP binding to an archaeal box-A promoter. Also responsible for recruiting RNA polymerase II to the pre-initiation complex (DNA-TBP-TFIIB). The chain is Transcription initiation factor IIB from Pyrococcus furiosus (strain ATCC 43587 / DSM 3638 / JCM 8422 / Vc1).